The primary structure comprises 430 residues: Histidine--tRNA ligase (430 aa).

Belongs to the class-II aminoacyl-tRNA synthetase family. In terms of assembly, homodimer.

Its subcellular location is the cytoplasm. The catalysed reaction is tRNA(His) + L-histidine + ATP = L-histidyl-tRNA(His) + AMP + diphosphate + H(+). In Parasynechococcus marenigrum (strain WH8102), this protein is Histidine--tRNA ligase.